The chain runs to 417 residues: Serine hydroxymethyltransferase 1 (417 aa).

(6S)-5,6,7,8-tetrahydrofolate-binding positions include leucine 121 and 125 to 127 (GHL). Residue lysine 229 is modified to N6-(pyridoxal phosphate)lysine. 355 to 357 (SPF) lines the (6S)-5,6,7,8-tetrahydrofolate pocket.

It belongs to the SHMT family. Homodimer. Pyridoxal 5'-phosphate is required as a cofactor.

The protein localises to the cytoplasm. The catalysed reaction is (6R)-5,10-methylene-5,6,7,8-tetrahydrofolate + glycine + H2O = (6S)-5,6,7,8-tetrahydrofolate + L-serine. It functions in the pathway one-carbon metabolism; tetrahydrofolate interconversion. It participates in amino-acid biosynthesis; glycine biosynthesis; glycine from L-serine: step 1/1. Catalyzes the reversible interconversion of serine and glycine with tetrahydrofolate (THF) serving as the one-carbon carrier. This reaction serves as the major source of one-carbon groups required for the biosynthesis of purines, thymidylate, methionine, and other important biomolecules. Also exhibits THF-independent aldolase activity toward beta-hydroxyamino acids, producing glycine and aldehydes, via a retro-aldol mechanism. This is Serine hydroxymethyltransferase 1 from Pectobacterium atrosepticum (strain SCRI 1043 / ATCC BAA-672) (Erwinia carotovora subsp. atroseptica).